The chain runs to 733 residues: Ferric aerobactin receptor (733 aa).

The signal sequence occupies residues 1–25 (MMISKKYTLWALNPLLLTMMAPAVA). Residues 31-38 (ETFVVSAN) carry the TonB box motif. One can recognise a TBDR plug domain in the interval 43–153 (TVAEMAQTTW…TGGLINIVTK (111 aa)). The 576-residue stretch at 158 to 733 (ETIMEFEAGT…TFGLNYSVLF (576 aa)) folds into the TBDR beta-barrel domain. The short motif at 716-733 (YDYKGRGRTFGLNYSVLF) is the TonB C-terminal box element.

The protein belongs to the TonB-dependent receptor family.

Its subcellular location is the cell outer membrane. Receptor for aerobactin. In Klebsiella pneumoniae, this protein is Ferric aerobactin receptor (iutA).